Consider the following 175-residue polypeptide: Sec-independent protein translocase protein TatB (175 aa).

The chain crosses the membrane as a helical span at residues Met-1–Gly-21. The span at Val-96–Gly-115 shows a compositional bias: low complexity. Disordered stretches follow at residues Val-96–Trp-119 and Gln-152–Leu-175. Basic residues predominate over residues Val-160–Leu-175.

The protein belongs to the TatB family. The Tat system comprises two distinct complexes: a TatABC complex, containing multiple copies of TatA, TatB and TatC subunits, and a separate TatA complex, containing only TatA subunits. Substrates initially bind to the TatABC complex, which probably triggers association of the separate TatA complex to form the active translocon.

It localises to the cell inner membrane. Its function is as follows. Part of the twin-arginine translocation (Tat) system that transports large folded proteins containing a characteristic twin-arginine motif in their signal peptide across membranes. Together with TatC, TatB is part of a receptor directly interacting with Tat signal peptides. TatB may form an oligomeric binding site that transiently accommodates folded Tat precursor proteins before their translocation. This Burkholderia pseudomallei (strain 1710b) protein is Sec-independent protein translocase protein TatB.